Consider the following 644-residue polypeptide: DNA mismatch repair protein MutL (644 aa).

Disordered regions lie at residues 353 to 399 (SESG…SQLT) and 420 to 440 (GSMA…RARA). The span at 370 to 381 (SPESKTHSTWNE) shows a compositional bias: polar residues. The span at 383-399 (SRVDTSRVEISRDSQLT) shows a compositional bias: basic and acidic residues.

The protein belongs to the DNA mismatch repair MutL/HexB family.

In terms of biological role, this protein is involved in the repair of mismatches in DNA. It is required for dam-dependent methyl-directed DNA mismatch repair. May act as a 'molecular matchmaker', a protein that promotes the formation of a stable complex between two or more DNA-binding proteins in an ATP-dependent manner without itself being part of a final effector complex. This chain is DNA mismatch repair protein MutL, found in Shewanella sp. (strain MR-4).